Consider the following 390-residue polypeptide: Glutamyl-tRNA reductase (390 aa).

Residues threonine 46–arginine 49, serine 96, glutamate 101–glutamine 103, and glutamine 107 each bind substrate. Cysteine 47 functions as the Nucleophile in the catalytic mechanism. NADP(+) is bound at residue glycine 176 to alanine 181.

The protein belongs to the glutamyl-tRNA reductase family. Homodimer.

The catalysed reaction is (S)-4-amino-5-oxopentanoate + tRNA(Glu) + NADP(+) = L-glutamyl-tRNA(Glu) + NADPH + H(+). The protein operates within porphyrin-containing compound metabolism; protoporphyrin-IX biosynthesis; 5-aminolevulinate from L-glutamyl-tRNA(Glu): step 1/2. Functionally, catalyzes the NADPH-dependent reduction of glutamyl-tRNA(Glu) to glutamate 1-semialdehyde (GSA). This is Glutamyl-tRNA reductase from Thermus thermophilus (strain ATCC BAA-163 / DSM 7039 / HB27).